A 594-amino-acid chain; its full sequence is Dual specificity protein phosphatase CDC14A (594 aa).

An a region spans residues 7–162 (ELIGACEFMK…GLQHGFFDFE (156 aa)). The segment at 163–176 (TFDVDEYEHYERVE) is linker. The interval 177 to 343 (NGDFNWIVPG…QGDIFRSKLK (167 aa)) is b. One can recognise a Tyrosine-protein phosphatase domain in the interval 179 to 336 (DFNWIVPGKF…KQASLWVQGD (158 aa)). The active-site Phosphocysteine intermediate is C278. The tract at residues 396-435 (GDKLRALKSQRQPRTSPSCAFRSDDTKGHPRAVSQPFRLS) is disordered. Positions 404–413 (SQRQPRTSPS) are enriched in polar residues. Residue S484 is modified to Phosphoserine. A disordered region spans residues 487 to 560 (NLNAATDDPE…PGPHSAKTEE (74 aa)). The segment covering 500-531 (TSSSSKAGFTASPFTNLLNGSSQPTTRNYPEL) has biased composition (polar residues). Over residues 532-549 (NNNQYNRSSNSNGGNLNS) the composition is skewed to low complexity. At S583 the chain carries Phosphoserine.

Belongs to the protein-tyrosine phosphatase family. Non-receptor class CDC14 subfamily. As to quaternary structure, interacts with KIF20A, which is required to localize CDC14 to the midzone of the mitotic spindle.

Its subcellular location is the nucleus. The protein resides in the cytoplasm. It localises to the cytoskeleton. It is found in the microtubule organizing center. The protein localises to the centrosome. Its subcellular location is the spindle pole. The protein resides in the spindle. It localises to the cell projection. It is found in the kinocilium. The protein localises to the stereocilium. It catalyses the reaction O-phospho-L-tyrosyl-[protein] + H2O = L-tyrosyl-[protein] + phosphate. The catalysed reaction is O-phospho-L-seryl-[protein] + H2O = L-seryl-[protein] + phosphate. The enzyme catalyses O-phospho-L-threonyl-[protein] + H2O = L-threonyl-[protein] + phosphate. In terms of biological role, dual-specificity phosphatase. Required for centrosome separation and productive cytokinesis during cell division. Dephosphorylates SIRT2 around early anaphase. May dephosphorylate the APC subunit FZR1/CDH1, thereby promoting APC-FZR1 dependent degradation of mitotic cyclins and subsequent exit from mitosis. Required for normal hearing. This Homo sapiens (Human) protein is Dual specificity protein phosphatase CDC14A (CDC14A).